A 413-amino-acid polypeptide reads, in one-letter code: Acetate kinase (413 aa).

Asn7 is a Mg(2+) binding site. Position 14 (Lys14) interacts with ATP. Position 98 (Arg98) interacts with substrate. Residue Asp157 is the Proton donor/acceptor of the active site. ATP is bound by residues 216–220 (HIGNG), 291–293 (DLR), and 339–343 (GVGEN). Glu392 lines the Mg(2+) pocket.

This sequence belongs to the acetokinase family. Homodimer. Mg(2+) is required as a cofactor. The cofactor is Mn(2+).

Its subcellular location is the cytoplasm. The enzyme catalyses acetate + ATP = acetyl phosphate + ADP. The protein operates within metabolic intermediate biosynthesis; acetyl-CoA biosynthesis; acetyl-CoA from acetate: step 1/2. Functionally, catalyzes the formation of acetyl phosphate from acetate and ATP. Can also catalyze the reverse reaction. This chain is Acetate kinase, found in Synechocystis sp. (strain ATCC 27184 / PCC 6803 / Kazusa).